The primary structure comprises 50 residues: PhoP/PhoQ regulator MgrB (50 aa).

The Cytoplasmic portion of the chain corresponds to 1-4 (MLDL). Residues 5–27 (NITKLVTTVVIIAACCLFYLLAL) traverse the membrane as a helical segment. The Periplasmic segment spans residues 28–50 (DSYCDQGGTFSTGICAITTIVPW).

The protein belongs to the MgrB family. As to quaternary structure, probably interacts with the periplasmic domain of PhoQ.

The protein resides in the cell inner membrane. In terms of biological role, phoP-regulated transcription is redox-sensitive, being activated when the periplasm becomes more reducing. MgrB acts between DsbA/DsbB and PhoP/PhoQ in this pathway. Represses PhoP/PhoQ signaling, possibly by binding to the periplasmic domain of PhoQ, altering its activity and that of downstream effector PhoP. In Yersinia pestis, this protein is PhoP/PhoQ regulator MgrB.